Here is a 97-residue protein sequence, read N- to C-terminus: Co-chaperonin GroES (97 aa).

It belongs to the GroES chaperonin family. Heptamer of 7 subunits arranged in a ring. Interacts with the chaperonin GroEL.

It localises to the cytoplasm. In terms of biological role, together with the chaperonin GroEL, plays an essential role in assisting protein folding. The GroEL-GroES system forms a nano-cage that allows encapsulation of the non-native substrate proteins and provides a physical environment optimized to promote and accelerate protein folding. GroES binds to the apical surface of the GroEL ring, thereby capping the opening of the GroEL channel. In Blochmanniella floridana, this protein is Co-chaperonin GroES.